Here is a 171-residue protein sequence, read N- to C-terminus: Disulfide bond formation protein B (171 aa).

Residues 1–8 are Cytoplasmic-facing; it reads MQWSYRFV. A helical transmembrane segment spans residues 9-25; sequence SGLLVLASIVGMTFALY. Topologically, residues 26–43 are periplasmic; it reads LEHFKGLEPCPLCIFQRV. Cysteines 35 and 38 form a disulfide. The chain crosses the membrane as a helical span at residues 44–60; the sequence is GLMAMGIVALIAFLHNP. Topologically, residues 61-67 are cytoplasmic; sequence VSNAFKR. A helical transmembrane segment spans residues 68 to 85; that stretch reads VYAFLATLGILWSVGVAI. Topologically, residues 86–142 are periplasmic; that stretch reads RHVWLQTLPPDQVPSCGPGLNYLLDALPLKTVLQQVLQGSGECAAIHWTFLGQSLPV. C101 and C128 form a disulfide bridge. The helical transmembrane segment at 143 to 161 threads the bilayer; the sequence is WSLAYFSLILLVCVWQLLR. The Cytoplasmic portion of the chain corresponds to 162–171; the sequence is RYPVIVTKKK.

This sequence belongs to the DsbB family.

The protein localises to the cell inner membrane. In terms of biological role, required for disulfide bond formation in some periplasmic proteins. Acts by oxidizing the DsbA protein. In Acinetobacter baylyi (strain ATCC 33305 / BD413 / ADP1), this protein is Disulfide bond formation protein B.